Consider the following 317-residue polypeptide: Bile salt hydrolase/transferase (317 aa).

C2 (nucleophile; acyl-thioester intermediate) is an active-site residue. Deoxycholate is bound by residues C2 and R18. A taurine-binding site is contributed by N82.

It belongs to the peptidase C59 family. As to quaternary structure, homotetramer. The tetramer consists of a dimer of dimers.

The catalysed reaction is glycocholate + H2O = cholate + glycine. The enzyme catalyses glycodeoxycholate + H2O = deoxycholate + glycine. It catalyses the reaction chenodeoxycholate + glycine = glycochenodeoxycholate + H2O. It carries out the reaction cholate + taurine = taurocholate + H2O. The catalysed reaction is taurodeoxycholate + H2O = deoxycholate + taurine. The enzyme catalyses taurochenodeoxycholate + H2O = chenodeoxycholate + taurine. It catalyses the reaction an L-alpha-amino acid + cholate = an N-choloyl-L-alpha-amino acid + H2O. It carries out the reaction an L-alpha-amino acid + taurocholate = an N-choloyl-L-alpha-amino acid + taurine. The catalysed reaction is cholate + L-alanine = L-alanocholate + H2O. The enzyme catalyses taurocholate + L-alanine = L-alanocholate + taurine. It catalyses the reaction cholate + L-serine = L-serocholate + H2O. It carries out the reaction taurocholate + L-serine = L-serocholate + taurine. The catalysed reaction is cholate + L-histidine = L-histidocholate + H2O. The enzyme catalyses taurocholate + L-histidine = L-histidocholate + taurine. It participates in lipid metabolism; bile acid biosynthesis. Possesses dual functions in bile acid metabolism. Acts as a bile salt hydrolase that catalyzes the deconjugation of glycine- and taurine-linked bile salts, which occurs naturally in the intestines of humans, releasing amino acid residues and deconjugated bile salts (bile acids). Can hydrolyze the amide bond in all six major human conjugated bile salts, namely glycocholate (GCA), glycodeoxycholate (GDCA), glycochenodeoxycholate (GCDCA), taurocholate (TCA), taurodeoxycholate (TDCA) and taurochenodeoxycholate (TCDCA). Shows a slight preference for glycine-conjugated bile acids as substrates. Also acts as an amine N-acyltransferase that conjugates a wide variety of amino acids to conjugated and non-conjugated bile acids, thus producing bacterial bile acid amidates (BBAAs) - also named microbially conjugated bile acids (MCBAs) - in the gastrointestinal tract. These BBAAs may facilitate communication between the microbiota and host through the activation of human ligand-activated transcription factors. This is Bile salt hydrolase/transferase from Bifidobacterium longum subsp. longum (strain ATCC 15707 / DSM 20219 / JCM 1217 / NCTC 11818 / E194b).